The following is a 693-amino-acid chain: MARDFSLEKTRNIGIMAHIDAGKTTTTERILYYTGRIHKIGETHEGASQMDWMEQEQDRGITITSAATTAQWHDYRVNIIDTPGHVDFTVEVERSLRVLDGAVTVLDAQSGVEPQTETVWRQATTYGVPRIVFVNKMDKLGANFEYSVSTLHDRLQANAQPIQLPIGAEDEFEAIIDLVTMKCYQYNGDFGEEVVEIEIPDDYKDKAAEARESLIEAVAEANEDLMEKYLEGEEITIDELKAAIRQATLDIEFYPVLCGTAFKNKGVQLMLDAVIDYLPSPLDVKPIVGHHADNPDEEVIAPADDDADFAALAFKVMTDPYVGKLTFFRVYSGTLNSGSYVKNSTKDKRERVGRLLQMHANTRKEISTVYSGDIAAAVGLKETGTGDTLCGEKNDIILESMEFPEPVIHLSVEPKSKADQDKMTQALVKLQEEDPTFHAHTDEETGQVIIGGMGELHLDILVDRMKKEFNVEANVGAPMVSYRETFKTPAKVQGKFSRQSGGRGQYGDVHIEFTPNEVGAGFEFENAIVGGVVPREYIPSVEAGLKDAMENGVVAGYPLIDVKAKLYDGSYHDVDSSEMAFKIAASLALKEAAKVADPVILEPMMKVEILMPEEYMGDIMGDVTSRRGRVDGMEARGNAQMVRAFVPLSEMFGYATSLRSNTQGRGTYTMYFDHYEEVPKSIAEDIIKKNKGE.

In terms of domain architecture, tr-type G spans 8 to 282 (EKTRNIGIMA…AVIDYLPSPL (275 aa)). GTP-binding positions include 17–24 (AHIDAGKT), 81–85 (DTPGH), and 135–138 (NKMD).

It belongs to the TRAFAC class translation factor GTPase superfamily. Classic translation factor GTPase family. EF-G/EF-2 subfamily.

The protein localises to the cytoplasm. Its function is as follows. Catalyzes the GTP-dependent ribosomal translocation step during translation elongation. During this step, the ribosome changes from the pre-translocational (PRE) to the post-translocational (POST) state as the newly formed A-site-bound peptidyl-tRNA and P-site-bound deacylated tRNA move to the P and E sites, respectively. Catalyzes the coordinated movement of the two tRNA molecules, the mRNA and conformational changes in the ribosome. This is Elongation factor G from Staphylococcus carnosus (strain TM300).